We begin with the raw amino-acid sequence, 311 residues long: uncharacterized protein (311 aa).

9 helical membrane-spanning segments follow: residues 11–31, 34–54, 72–92, 101–121, 147–167, 198–218, 233–253, 257–277, and 279–299; these read LDNW…GYLS, VGIV…FLSL, LAIS…LFGI, HVIV…FVAQ, IEGI…WYLM, WFGV…FALS, GFIA…SIVI, FALA…TYLL, and TIPF…NVGP.

Its subcellular location is the cell membrane. This is an uncharacterized protein from Mycoplasma pneumoniae (strain ATCC 29342 / M129 / Subtype 1) (Mycoplasmoides pneumoniae).